The primary structure comprises 293 residues: ATP synthase gamma chain (293 aa).

The protein belongs to the ATPase gamma chain family. F-type ATPases have 2 components, CF(1) - the catalytic core - and CF(0) - the membrane proton channel. CF(1) has five subunits: alpha(3), beta(3), gamma(1), delta(1), epsilon(1). CF(0) has three main subunits: a, b and c.

It localises to the cell membrane. Produces ATP from ADP in the presence of a proton gradient across the membrane. The gamma chain is believed to be important in regulating ATPase activity and the flow of protons through the CF(0) complex. The protein is ATP synthase gamma chain of Streptococcus sanguinis.